Here is a 271-residue protein sequence, read N- to C-terminus: Peroxiredoxin-4 (271 aa).

An N-terminal signal peptide occupies residues 1-37 (MEALPLLAATTPDHGRHRRLLLLPLLLFLLPAGAVQG). Residues 79–237 (AKISKPAPYW…TLRLVQAFQY (159 aa)) form the Thioredoxin domain. Catalysis depends on Cys124, which acts as the Cysteine sulfenic acid (-SOH) intermediate.

The protein belongs to the peroxiredoxin family. AhpC/Prx1 subfamily. As to quaternary structure, homodimer; disulfide-linked, upon oxidation. 5 homodimers assemble to form a ring-like decamer. Can form heterodimers with PRDX1. The enzyme can be inactivated by further oxidation of the cysteine sulfenic acid (C(P)-SOH) to sulphinic acid (C(P)-SO2H) and sulphonic acid (C(P)-SO3H) instead of its condensation to a disulfide bond.

Its subcellular location is the cytoplasm. It is found in the endoplasmic reticulum. It carries out the reaction a hydroperoxide + [thioredoxin]-dithiol = an alcohol + [thioredoxin]-disulfide + H2O. Thiol-specific peroxidase that catalyzes the reduction of hydrogen peroxide and organic hydroperoxides to water and alcohols, respectively. Plays a role in cell protection against oxidative stress by detoxifying peroxides and as sensor of hydrogen peroxide-mediated signaling events. Regulates the activation of NF-kappa-B in the cytosol by a modulation of I-kappa-B-alpha phosphorylation. The protein is Peroxiredoxin-4 (PRDX4) of Homo sapiens (Human).